A 346-amino-acid chain; its full sequence is Upstream stimulatory factor 2 (346 aa).

2 disordered regions span residues 1–44 (MDML…PGAE) and 215–244 (APRTHPYSPKIDGTRTPRDERRRAQHNEVE). Positions 11–20 (AASATAAAAA) are enriched in low complexity. Positions 226 to 244 (DGTRTPRDERRRAQHNEVE) are enriched in basic and acidic residues. Residues 235-290 (RRRAQHNEVERRRRDKINNWIVQLSKIIPDCNADNSKTGASKGGILSKACDYIREL) form the bHLH domain. A leucine-zipper region spans residues 307–328 (LQMDNELLRQQIEELKNENALL).

As to quaternary structure, interacts with MAF. Efficient DNA binding requires dimerization with another bHLH protein. Binds DNA as a homodimer or a heterodimer (USF1/USF2). In vivo, the USF1/USF2A heterodimer represents over 66% of the usf binding activity whereas the USF1 and USF2A homodimers represent less than 10%. The USF1/USF2B heterodimer accounted for almost 15% in some cell. As to expression, ubiquitous.

The protein localises to the nucleus. Functionally, transcription factor that binds to a symmetrical DNA sequence (E-boxes) (5'-CACGTG-3') that is found in a variety of viral and cellular promoters. The polypeptide is Upstream stimulatory factor 2 (USF2) (Homo sapiens (Human)).